The following is a 182-amino-acid chain: Large ribosomal subunit protein uL5 (182 aa).

This sequence belongs to the universal ribosomal protein uL5 family. Part of the 50S ribosomal subunit; part of the 5S rRNA/L5/L18/L25 subcomplex. Contacts the 5S rRNA and the P site tRNA. Forms a bridge to the 30S subunit in the 70S ribosome.

This is one of the proteins that bind and probably mediate the attachment of the 5S RNA into the large ribosomal subunit, where it forms part of the central protuberance. In the 70S ribosome it contacts protein S13 of the 30S subunit (bridge B1b), connecting the 2 subunits; this bridge is implicated in subunit movement. Contacts the P site tRNA; the 5S rRNA and some of its associated proteins might help stabilize positioning of ribosome-bound tRNAs. This chain is Large ribosomal subunit protein uL5, found in Thermus aquaticus.